The chain runs to 143 residues: Large ribosomal subunit protein uL11 (143 aa).

Belongs to the universal ribosomal protein uL11 family. As to quaternary structure, part of the ribosomal stalk of the 50S ribosomal subunit. Interacts with L10 and the large rRNA to form the base of the stalk. L10 forms an elongated spine to which L12 dimers bind in a sequential fashion forming a multimeric L10(L12)X complex. Post-translationally, one or more lysine residues are methylated.

Its function is as follows. Forms part of the ribosomal stalk which helps the ribosome interact with GTP-bound translation factors. The polypeptide is Large ribosomal subunit protein uL11 (Albidiferax ferrireducens (strain ATCC BAA-621 / DSM 15236 / T118) (Rhodoferax ferrireducens)).